The chain runs to 145 residues: D-aminoacyl-tRNA deacylase (145 aa).

Positions 137 to 138 (GP) match the Gly-cisPro motif, important for rejection of L-amino acids motif.

The protein belongs to the DTD family. In terms of assembly, homodimer.

The protein localises to the cytoplasm. The catalysed reaction is glycyl-tRNA(Ala) + H2O = tRNA(Ala) + glycine + H(+). The enzyme catalyses a D-aminoacyl-tRNA + H2O = a tRNA + a D-alpha-amino acid + H(+). In terms of biological role, an aminoacyl-tRNA editing enzyme that deacylates mischarged D-aminoacyl-tRNAs. Also deacylates mischarged glycyl-tRNA(Ala), protecting cells against glycine mischarging by AlaRS. Acts via tRNA-based rather than protein-based catalysis; rejects L-amino acids rather than detecting D-amino acids in the active site. By recycling D-aminoacyl-tRNA to D-amino acids and free tRNA molecules, this enzyme counteracts the toxicity associated with the formation of D-aminoacyl-tRNA entities in vivo and helps enforce protein L-homochirality. In Aeromonas hydrophila subsp. hydrophila (strain ATCC 7966 / DSM 30187 / BCRC 13018 / CCUG 14551 / JCM 1027 / KCTC 2358 / NCIMB 9240 / NCTC 8049), this protein is D-aminoacyl-tRNA deacylase.